The following is a 115-amino-acid chain: Large ribosomal subunit protein uL22 (115 aa).

It belongs to the universal ribosomal protein uL22 family. In terms of assembly, part of the 50S ribosomal subunit.

In terms of biological role, this protein binds specifically to 23S rRNA; its binding is stimulated by other ribosomal proteins, e.g. L4, L17, and L20. It is important during the early stages of 50S assembly. It makes multiple contacts with different domains of the 23S rRNA in the assembled 50S subunit and ribosome. Its function is as follows. The globular domain of the protein is located near the polypeptide exit tunnel on the outside of the subunit, while an extended beta-hairpin is found that lines the wall of the exit tunnel in the center of the 70S ribosome. This chain is Large ribosomal subunit protein uL22, found in Coxiella burnetii (strain CbuG_Q212) (Coxiella burnetii (strain Q212)).